The chain runs to 1325 residues: uncharacterized protein (1325 aa).

The N-terminal stretch at 1 to 18 (MNRIYRVIWNCTLQVFQA) is a signal peptide. Cys-19 carries N-palmitoyl cysteine lipidation. Cys-19 is lipidated: S-diacylglycerol cysteine.

The protein to E.coli YfaL.

Its subcellular location is the cell membrane. This is an uncharacterized protein from Escherichia coli (strain K12).